The sequence spans 142 residues: Type II secretion system core protein G (142 aa).

The propeptide at Met1–Gly8 is leader sequence. An N-methylphenylalanine modification is found at Phe9. Residues Phe9–Val29 traverse the membrane as a helical segment. The interval Ser122–Lys142 is disordered.

Belongs to the GSP G family. As to quaternary structure, type II secretion system is composed of four main components: the outer membrane complex, the inner membrane complex, the cytoplasmic secretion ATPase and the periplasm-spanning pseudopilus. Forms homomultimers. Post-translationally, cleaved by the prepilin peptidase. Methylated by prepilin peptidase at the amino group of the N-terminal phenylalanine once the leader sequence is cleaved.

Its subcellular location is the cell inner membrane. Its function is as follows. Core component of the type II secretion system required for the energy-dependent secretion of extracellular factors such as proteases and toxins from the periplasm. Pseudopilin (pilin-like) protein that polymerizes to form the pseudopilus. Further polymerization triggers pseudopilus growth. The chain is Type II secretion system core protein G from Klebsiella michiganensis (strain ATCC 8724 / DSM 4798 / JCM 20051 / NBRC 3318 / NRRL B-199 / KCTC 1686 / BUCSAV 143 / CCM 1901).